The following is a 326-amino-acid chain: Protein SEH1 (326 aa).

5 WD repeats span residues 7–46, 54–95, 105–146, 224–266, and 278–317; these read TLDS…SSTF, VSES…AHGL, NKSS…ELKN, DKGD…DLEG, and GHQG…EWHE.

This sequence belongs to the WD repeat SEC13 family. As to quaternary structure, part of the nuclear pore complex (NPC). The NPC has an eight-fold symmetrical structure comprising a central transport channel and two rings, the cytoplasmic and nuclear rings, to which eight filaments are attached. The cytoplasmic filaments have loose ends, while the nuclear filaments are joined in a distal ring, forming a nuclear basket. NPCs are highly dynamic in configuration and composition, and can be devided in 3 subcomplexes, the NUP62 subcomplex, the NUP107-160 subcomplex and the NUP93 subcomplex, containing approximately 30 different nucleoporin proteins.

It localises to the nucleus envelope. The protein localises to the nucleus. It is found in the cytoplasm. The protein resides in the nuclear pore complex. In terms of biological role, required for proper export of mRNAs from the nucleus to the cytoplasm. This is Protein SEH1 from Arabidopsis thaliana (Mouse-ear cress).